Here is a 248-residue protein sequence, read N- to C-terminus: NADP-dependent 3-hydroxy acid dehydrogenase YdfG (248 aa).

NADP(+)-binding positions include glycine 7 to phenylalanine 12, arginine 32 to arginine 33, aspartate 54 to valine 55, and asparagine 81. Residue serine 134 coordinates substrate. Residues tyrosine 147, lysine 151, and proline 177–phenylalanine 185 contribute to the NADP(+) site. Tyrosine 147 acts as the Proton acceptor in catalysis.

This sequence belongs to the short-chain dehydrogenases/reductases (SDR) family. In terms of assembly, homotetramer.

It carries out the reaction 3-hydroxypropanoate + NADP(+) = 3-oxopropanoate + NADPH + H(+). The catalysed reaction is L-allo-threonine + NADP(+) = aminoacetone + CO2 + NADPH. Functionally, NADP-dependent dehydrogenase with broad substrate specificity acting on 3-hydroxy acids. Catalyzes the NADP-dependent oxidation of L-allo-threonine to L-2-amino-3-keto-butyrate, which is spontaneously decarboxylated into aminoacetone. Also acts on D-threonine, L-serine, D-serine, D-3-hydroxyisobutyrate, L-3-hydroxyisobutyrate, D-glycerate and L-glycerate. Able to catalyze the reduction of the malonic semialdehyde to 3-hydroxypropionic acid. YdfG is apparently supplementing RutE, the presumed malonic semialdehyde reductase involved in pyrimidine degradation since both are able to detoxify malonic semialdehyde. The polypeptide is NADP-dependent 3-hydroxy acid dehydrogenase YdfG (Escherichia coli (strain K12)).